Here is a 212-residue protein sequence, read N- to C-terminus: HTH-type transcriptional regulator RutR (212 aa).

In terms of domain architecture, HTH tetR-type spans 17–77 (SAKKKAILSA…AVLRQILDIW (61 aa)). Residues 39 to 58 (TRLEQIAELAGVSKTNLLYY) constitute a DNA-binding region (H-T-H motif).

As to quaternary structure, homodimer.

Master transcription regulator which represses the degradation of pyrimidines (rutABCDEFG) and purines (gcl operon) for maintenance of metabolic balance between pyrimidines and purines. It also regulates the synthesis of pyrimidine nucleotides and arginine from glutamine (carAB) and the supply of glutamate (gadABWX). The protein is HTH-type transcriptional regulator RutR (rutR) of Escherichia coli O157:H7.